The sequence spans 434 residues: Pectate lyase (434 aa).

Positions methionine 1–alanine 22 are cleaved as a signal peptide. Asparagine 68 and asparagine 97 each carry an N-linked (GlcNAc...) asparagine glycan. 3 residues coordinate Ca(2+): aspartate 232, aspartate 256, and aspartate 260. Arginine 312 is a catalytic residue.

This sequence belongs to the polysaccharide lyase 1 family. Requires Ca(2+) as cofactor.

The catalysed reaction is Eliminative cleavage of (1-&gt;4)-alpha-D-galacturonan to give oligosaccharides with 4-deoxy-alpha-D-galact-4-enuronosyl groups at their non-reducing ends.. It participates in glycan metabolism; pectin degradation; 2-dehydro-3-deoxy-D-gluconate from pectin: step 2/5. This is Pectate lyase from Lilium longiflorum (Trumpet lily).